A 132-amino-acid chain; its full sequence is Large ribosomal subunit protein bL17 (132 aa).

The protein belongs to the bacterial ribosomal protein bL17 family. As to quaternary structure, part of the 50S ribosomal subunit. Contacts protein L32.

The chain is Large ribosomal subunit protein bL17 from Cellvibrio japonicus (strain Ueda107) (Pseudomonas fluorescens subsp. cellulosa).